The sequence spans 405 residues: Adenylosuccinate synthetase (405 aa).

GTP is bound by residues 12–18 (GDEGKGK) and 40–42 (GHT). Asp-13 (proton acceptor) is an active-site residue. Residues Asp-13 and Gly-40 each coordinate Mg(2+). Residues 13–16 (DEGK), 38–41 (NAGH), Thr-121, Arg-135, Gln-213, Thr-228, and Arg-297 contribute to the IMP site. The Proton donor role is filled by His-41. Position 293–299 (293–299 (TTTGRPR)) interacts with substrate. Residues Arg-299, 325–327 (KMD), and 390–392 (SAG) each bind GTP.

Belongs to the adenylosuccinate synthetase family. As to quaternary structure, homodimer. Mg(2+) is required as a cofactor.

The protein resides in the cytoplasm. It carries out the reaction IMP + L-aspartate + GTP = N(6)-(1,2-dicarboxyethyl)-AMP + GDP + phosphate + 2 H(+). It functions in the pathway purine metabolism; AMP biosynthesis via de novo pathway; AMP from IMP: step 1/2. Plays an important role in the de novo pathway of purine nucleotide biosynthesis. Catalyzes the first committed step in the biosynthesis of AMP from IMP. This chain is Adenylosuccinate synthetase, found in Deinococcus radiodurans (strain ATCC 13939 / DSM 20539 / JCM 16871 / CCUG 27074 / LMG 4051 / NBRC 15346 / NCIMB 9279 / VKM B-1422 / R1).